A 118-amino-acid polypeptide reads, in one-letter code: Aspartate 1-decarboxylase (118 aa).

Serine 25 functions as the Schiff-base intermediate with substrate; via pyruvic acid in the catalytic mechanism. A Pyruvic acid (Ser) modification is found at serine 25. Threonine 57 contributes to the substrate binding site. Tyrosine 58 serves as the catalytic Proton donor. 73 to 75 (GAA) is a binding site for substrate.

The protein belongs to the PanD family. Heterooctamer of four alpha and four beta subunits. Pyruvate is required as a cofactor. In terms of processing, is synthesized initially as an inactive proenzyme, which is activated by self-cleavage at a specific serine bond to produce a beta-subunit with a hydroxyl group at its C-terminus and an alpha-subunit with a pyruvoyl group at its N-terminus.

Its subcellular location is the cytoplasm. It carries out the reaction L-aspartate + H(+) = beta-alanine + CO2. Its pathway is cofactor biosynthesis; (R)-pantothenate biosynthesis; beta-alanine from L-aspartate: step 1/1. In terms of biological role, catalyzes the pyruvoyl-dependent decarboxylation of aspartate to produce beta-alanine. This is Aspartate 1-decarboxylase from Hyphomonas neptunium (strain ATCC 15444).